Reading from the N-terminus, the 169-residue chain is Putative cysteine protease YraA (169 aa).

The region spanning 3–169 (KKIAVLVTDQ…FNRESLNLLK (167 aa)) is the PfpI endopeptidase domain. Cysteine 103 serves as the catalytic Nucleophile. Histidine 104 is an active-site residue.

Belongs to the peptidase C56 family.

Its function is as follows. Functions in the protection against aldehyde-stress, possibly by degrading damaged proteins. The polypeptide is Putative cysteine protease YraA (yraA) (Bacillus subtilis (strain 168)).